Consider the following 139-residue polypeptide: D-ribose pyranase (139 aa).

Histidine 20 acts as the Proton donor in catalysis. Residues aspartate 28, histidine 106, and 128–130 contribute to the substrate site; that span reads FAN.

Belongs to the RbsD / FucU family. RbsD subfamily. In terms of assembly, homodecamer.

Its subcellular location is the cytoplasm. It catalyses the reaction beta-D-ribopyranose = beta-D-ribofuranose. It participates in carbohydrate metabolism; D-ribose degradation; D-ribose 5-phosphate from beta-D-ribopyranose: step 1/2. Its function is as follows. Catalyzes the interconversion of beta-pyran and beta-furan forms of D-ribose. This Yersinia pseudotuberculosis serotype O:1b (strain IP 31758) protein is D-ribose pyranase.